Consider the following 595-residue polypeptide: UvrABC system protein C (595 aa).

The 78-residue stretch at 14–91 (SNPGCYLHKD…IQENMPKFNI (78 aa)) folds into the GIY-YIG domain. A UVR domain is found at 196-231 (DKIVNQLKAKMKDMSDQMEFERAAEYRDLIEAVSTL).

The protein belongs to the UvrC family. As to quaternary structure, interacts with UvrB in an incision complex.

It localises to the cytoplasm. Its function is as follows. The UvrABC repair system catalyzes the recognition and processing of DNA lesions. UvrC both incises the 5' and 3' sides of the lesion. The N-terminal half is responsible for the 3' incision and the C-terminal half is responsible for the 5' incision. This is UvrABC system protein C from Streptococcus thermophilus (strain CNRZ 1066).